We begin with the raw amino-acid sequence, 348 residues long: Dihydroorotase (348 aa).

Zn(2+)-binding residues include His-14 and His-16. Residues 16 to 18 (HLR) and Asn-42 contribute to the substrate site. Zn(2+)-binding residues include Lys-100, His-137, and His-175. Lys-100 carries the N6-carboxylysine modification. His-137 provides a ligand contact to substrate. Leu-220 contributes to the substrate binding site. Asp-248 is a Zn(2+) binding site. The active site involves Asp-248. Residues His-252 and Ala-264 each contribute to the substrate site.

This sequence belongs to the metallo-dependent hydrolases superfamily. DHOase family. Class II DHOase subfamily. Homodimer. The cofactor is Zn(2+).

It catalyses the reaction (S)-dihydroorotate + H2O = N-carbamoyl-L-aspartate + H(+). The protein operates within pyrimidine metabolism; UMP biosynthesis via de novo pathway; (S)-dihydroorotate from bicarbonate: step 3/3. In terms of biological role, catalyzes the reversible cyclization of carbamoyl aspartate to dihydroorotate. In Synechococcus sp. (strain CC9605), this protein is Dihydroorotase.